The following is a 255-amino-acid chain: 1-(5-phosphoribosyl)-5-[(5-phosphoribosylamino)methylideneamino] imidazole-4-carboxamide isomerase (255 aa).

Asp8 functions as the Proton acceptor in the catalytic mechanism. The active-site Proton donor is the Asp129.

The protein belongs to the HisA/HisF family.

The protein localises to the cytoplasm. The enzyme catalyses 1-(5-phospho-beta-D-ribosyl)-5-[(5-phospho-beta-D-ribosylamino)methylideneamino]imidazole-4-carboxamide = 5-[(5-phospho-1-deoxy-D-ribulos-1-ylimino)methylamino]-1-(5-phospho-beta-D-ribosyl)imidazole-4-carboxamide. The protein operates within amino-acid biosynthesis; L-histidine biosynthesis; L-histidine from 5-phospho-alpha-D-ribose 1-diphosphate: step 4/9. This chain is 1-(5-phosphoribosyl)-5-[(5-phosphoribosylamino)methylideneamino] imidazole-4-carboxamide isomerase, found in Prochlorococcus marinus (strain MIT 9312).